We begin with the raw amino-acid sequence, 212 residues long: Soluble inorganic pyrophosphatase 1 (212 aa).

Substrate-binding residues include Lys62 and Arg76. Tyr84 acts as the Proton donor in catalysis. Residue Tyr88 participates in substrate binding. Asp98, Asp103, and Asp135 together coordinate Mg(2+). Tyr172 serves as a coordination point for substrate.

Belongs to the PPase family. Monomer. The cofactor is Mg(2+). As to expression, ubiquitous. Lower level of expression in ovary, stigma and pollen.

The protein resides in the cytoplasm. The enzyme catalyses diphosphate + H2O = 2 phosphate + H(+). Its activity is regulated as follows. Inhibited by Zn(2+), Ca(2+), Ba(2+), Fe(2+), Co(2+), Cu(2+), Eu(2+), Eu(3+) and Mn(2+). In terms of biological role, catalyzes the irreversible hydrolysis of pyrophosphate (PPi) to phosphate. The MgPPi(2-) complex binds to the enzyme only after a free Mg(2+) ion has bound. No activity with glycerol-3-phosphate, glucose-6-phosphate, p-nitrophenylphosphate, ADP, NADP(+), NAD(+),NADH, NADPH or phosphoribosyl pyrophosphate as substrates. Controls the equilibrium of gluconeogenic reactions in the heterotrophic growth phase of early seedling establishment. Determinates the rate of cytosolic glycolysis, providing carbon for seed storage lipid accumulation. This Arabidopsis thaliana (Mouse-ear cress) protein is Soluble inorganic pyrophosphatase 1.